A 941-amino-acid polypeptide reads, in one-letter code: Coiled-coil domain-containing protein 39 (941 aa).

Coiled-coil stretches lie at residues 16–122 (AIPV…ENGI), 164–273 (AQQD…ESEI), 306–605 (QLKG…EIKV), and 665–825 (IKAA…EEQD). The tract at residues 868 to 941 (PTASTKGSRQ…SNVKSKKSSK (74 aa)) is disordered. 2 stretches are compositionally biased toward low complexity: residues 871 to 903 (STKG…SQSS) and 914 to 934 (SSSL…SSNV). Ser-892 and Ser-900 each carry phosphoserine.

Belongs to the CCDC39 family. Mainly expressed in nasal brushings and, to a lesser extent, in lungs and testis.

It localises to the cytoplasm. The protein localises to the cytoskeleton. The protein resides in the cilium axoneme. Its function is as follows. Required for assembly of dynein regulatory complex (DRC) and inner dynein arm (IDA) complexes, which are responsible for ciliary beat regulation, thereby playing a central role in motility in cilia and flagella. Probably acts together with CCDC40 to form a molecular ruler that determines the 96 nanometer (nm) repeat length and arrangements of components in cilia and flagella. Not required for outer dynein arm complexes assembly. The sequence is that of Coiled-coil domain-containing protein 39 from Homo sapiens (Human).